The following is a 198-amino-acid chain: dITP/XTP pyrophosphatase (198 aa).

8 to 13 (TKNKGK) lines the substrate pocket. Asp-69 (proton acceptor) is an active-site residue. Asp-69 provides a ligand contact to Mg(2+). Substrate-binding positions include Ser-70, 152–155 (FGYD), Lys-175, and 180–181 (HR).

It belongs to the HAM1 NTPase family. Homodimer. Mg(2+) is required as a cofactor.

It carries out the reaction XTP + H2O = XMP + diphosphate + H(+). The catalysed reaction is dITP + H2O = dIMP + diphosphate + H(+). It catalyses the reaction ITP + H2O = IMP + diphosphate + H(+). In terms of biological role, pyrophosphatase that catalyzes the hydrolysis of nucleoside triphosphates to their monophosphate derivatives, with a high preference for the non-canonical purine nucleotides XTP (xanthosine triphosphate), dITP (deoxyinosine triphosphate) and ITP. Seems to function as a house-cleaning enzyme that removes non-canonical purine nucleotides from the nucleotide pool, thus preventing their incorporation into DNA/RNA and avoiding chromosomal lesions. The protein is dITP/XTP pyrophosphatase of Shouchella clausii (strain KSM-K16) (Alkalihalobacillus clausii).